The chain runs to 623 residues: Glutathione import ATP-binding protein GsiA (623 aa).

ABC transporter domains lie at 15–269 (VENL…RALL) and 314–564 (LRVR…RKLL). Residues 49–56 (GESGSGKS) and 357–364 (GESGSGKS) contribute to the ATP site.

It belongs to the ABC transporter superfamily. Glutathione importer (TC 3.A.1.5.11) family. In terms of assembly, the complex is composed of two ATP-binding proteins (GsiA), two transmembrane proteins (GsiC and GsiD) and a solute-binding protein (GsiB).

The protein localises to the cell inner membrane. The enzyme catalyses glutathione(out) + ATP + H2O = glutathione(in) + ADP + phosphate + H(+). Inhibited by verapamil but not by carbonyl cyanide m-chlorophenylhydrazone (CCCP). Functionally, part of the ABC transporter complex GsiABCD involved in glutathione import. Responsible for energy coupling to the transport system. The chain is Glutathione import ATP-binding protein GsiA from Escherichia coli (strain K12).